A 471-amino-acid chain; its full sequence is Tryptophan--tRNA ligase, cytoplasmic (471 aa).

The WHEP-TRS domain maps to 8–64 (SLLELFNSIATQGELVRSLKAGNASKDEIDSAVKMLVSLKMSYKAAAGEDYKADCPP). A disordered region spans residues 59–79 (KADCPPGNPAPTSNHGPDATE). K154 carries the post-translational modification N6-succinyllysine. The 'HIGH' region motif lies at 164-173 (PSSEAMHVGH). The 'KMSKS' region signature appears at 349–353 (KMSAS). The residue at position 351 (S351) is a Phosphoserine.

It belongs to the class-I aminoacyl-tRNA synthetase family. Homodimer. Interacts with an oxidized form of GAPDH. GAPDH stimulates the aminoacylation activity of isoform 2. Proteolytic cleavage generates 2 forms; T1-TrpRS and T2-TrpRS.

It localises to the cytoplasm. The enzyme catalyses tRNA(Trp) + L-tryptophan + ATP = L-tryptophyl-tRNA(Trp) + AMP + diphosphate + H(+). Catalyzes the attachment of tryptophan to tRNA(Trp) in a two-step reaction: tryptophan is first activated by ATP to form Trp-AMP and then transferred to the acceptor end of the tRNA(Trp). In terms of biological role, has no angiostatic activity. Its function is as follows. Possesses an angiostatic activity but has no aminoacylation activity. Inhibits fluid shear stress-activated responses of endothelial cells. Regulates ERK, Akt, and eNOS activation pathways that are associated with angiogenesis, cytoskeletal reorganization and shear stress-responsive gene expression. Functionally, has an angiostatic activity. In Homo sapiens (Human), this protein is Tryptophan--tRNA ligase, cytoplasmic.